Consider the following 221-residue polypeptide: UPF0502 protein PSPA7_1674 (221 aa).

It belongs to the UPF0502 family.

The polypeptide is UPF0502 protein PSPA7_1674 (Pseudomonas paraeruginosa (strain DSM 24068 / PA7) (Pseudomonas aeruginosa (strain PA7))).